Here is a 267-residue protein sequence, read N- to C-terminus: Putative carbamate hydrolase RutD (267 aa).

The AB hydrolase-1 domain occupies 14–115 (PTLVLSAGLG…EKLVVVNGWP (102 aa)).

The protein belongs to the AB hydrolase superfamily. Hydrolase RutD family.

The catalysed reaction is carbamate + 2 H(+) = NH4(+) + CO2. Its function is as follows. Involved in pyrimidine catabolism. May facilitate the hydrolysis of carbamate, a reaction that can also occur spontaneously. In Serratia proteamaculans (strain 568), this protein is Putative carbamate hydrolase RutD.